Here is a 349-residue protein sequence, read N- to C-terminus: Quinolinate synthase (349 aa).

Iminosuccinate contacts are provided by His-52 and Ser-69. Cys-114 contributes to the [4Fe-4S] cluster binding site. Iminosuccinate is bound by residues 140 to 142 (YFN) and Ser-157. Cys-201 is a [4Fe-4S] cluster binding site. Iminosuccinate contacts are provided by residues 227–229 (HPE) and Thr-255. Position 300 (Cys-300) interacts with [4Fe-4S] cluster.

Belongs to the quinolinate synthase family. Type 2 subfamily. It depends on [4Fe-4S] cluster as a cofactor.

The protein localises to the cytoplasm. It carries out the reaction iminosuccinate + dihydroxyacetone phosphate = quinolinate + phosphate + 2 H2O + H(+). Its pathway is cofactor biosynthesis; NAD(+) biosynthesis; quinolinate from iminoaspartate: step 1/1. Catalyzes the condensation of iminoaspartate with dihydroxyacetone phosphate to form quinolinate. This Mycolicibacterium paratuberculosis (strain ATCC BAA-968 / K-10) (Mycobacterium paratuberculosis) protein is Quinolinate synthase.